A 229-amino-acid chain; its full sequence is tRNA pseudouridine synthase B (229 aa).

The active-site Nucleophile is the D52.

It belongs to the pseudouridine synthase TruB family. Type 1 subfamily.

It catalyses the reaction uridine(55) in tRNA = pseudouridine(55) in tRNA. In terms of biological role, responsible for synthesis of pseudouridine from uracil-55 in the psi GC loop of transfer RNAs. In Flavobacterium johnsoniae (strain ATCC 17061 / DSM 2064 / JCM 8514 / BCRC 14874 / CCUG 350202 / NBRC 14942 / NCIMB 11054 / UW101) (Cytophaga johnsonae), this protein is tRNA pseudouridine synthase B.